Consider the following 442-residue polypeptide: ATP-dependent RNA helicase SUB2 (442 aa).

Residues 59 to 87 (TGFRDFLLKGELLRAITDCGFEHPSEVQQ) carry the Q motif motif. The Helicase ATP-binding domain occupies 90 to 265 (IPTAILNVDV…KKFMRNPLEV (176 aa)). 103–110 (AKSGLGKT) provides a ligand contact to ATP. The short motif at 212–215 (DECD) is the DECD box element. Residues 293–438 (KLNELLDSLE…EYPQGGVDSS (146 aa)) form the Helicase C-terminal domain.

This sequence belongs to the DEAD box helicase family. DECD subfamily.

It is found in the nucleus. It catalyses the reaction ATP + H2O = ADP + phosphate + H(+). Functionally, ATP-binding RNA helicase involved in transcription elongation and required for the export of mRNA out of the nucleus. SUB2 also plays a role in pre-mRNA splicing and spliceosome assembly. May be involved in rDNA and telomeric silencing, and maintenance of genome integrity. This is ATP-dependent RNA helicase SUB2 (SUB2) from Ajellomyces capsulatus (strain NAm1 / WU24) (Darling's disease fungus).